A 396-amino-acid polypeptide reads, in one-letter code: Elongation factor Tu (396 aa).

Positions 11–205 (KPHVNIGTIG…TIDEYIPTPV (195 aa)) constitute a tr-type G domain. The segment at 20–27 (GHVDHGKT) is G1. 20 to 27 (GHVDHGKT) contributes to the GTP binding site. Thr27 provides a ligand contact to Mg(2+). The interval 61 to 65 (GITIN) is G2. The interval 82–85 (DAPG) is G3. GTP is bound by residues 82–86 (DAPGH) and 137–140 (NKTD). Residues 137 to 140 (NKTD) are G4. Positions 175 to 177 (SAL) are G5.

It belongs to the TRAFAC class translation factor GTPase superfamily. Classic translation factor GTPase family. EF-Tu/EF-1A subfamily. As to quaternary structure, monomer.

It is found in the cytoplasm. It carries out the reaction GTP + H2O = GDP + phosphate + H(+). Its function is as follows. GTP hydrolase that promotes the GTP-dependent binding of aminoacyl-tRNA to the A-site of ribosomes during protein biosynthesis. In Lacticaseibacillus casei (strain BL23) (Lactobacillus casei), this protein is Elongation factor Tu.